The following is a 191-amino-acid chain: Calcium and integrin-binding protein 1 (191 aa).

A lipid anchor (N-myristoyl glycine) is attached at glycine 2. EF-hand domains lie at threonine 103–glutamate 138 and glutamate 148–phenylalanine 183. The Ca(2+) site is built by aspartate 116, aspartate 118, aspartate 120, threonine 122, aspartate 127, aspartate 161, aspartate 163, aspartate 165, threonine 167, and glutamate 172.

In terms of assembly, monomer. Interacts with the heterodimeric integrin alpha-IIb/beta3 (ITGA2B-ITGB3). Interacts with ITGA2B (via cytoplasmic domain); the interaction is direct and calcium-dependent. Interacts with the protein kinases PLK2/SNK and PRKDC (via the region immediately upstream of the kinase domain). Interacts with PLK3; the interaction inhibits PLK3 kinase activity. Interacts with PSEN2. Interacts (via C-terminus) with F8. Interacts with NBR1 (via C-terminus). Interacts with FEZ1 (via C-terminus). Interacts with UBR5 (via C-terminus); the interaction is sensitive to DNA damage, and may target CIB1 for ubiquitin-mediated degradation. Interacts with IFI6; the interaction is direct. Interacts with BCL2. Interacts with ITPR3; the interaction occurs in a calcium dependent manner. Interacts with PTK2/FAK1. Interacts with MAP3K5; the interaction inhibits MAP3K5 activation by phosphorylation, and its subsequent interaction with TRAF2. Interacts (via C-terminal region) with STMN2 (via the N-terminal region); the interaction is direct, occurs in a calcium-dependent manner and attenuates the STMN2-induced neurite outgrowth inhibition. Interacts with SPHK1, the interaction occurs in a calcium-dependent manner. Interacts with ITGA2B (via C-terminal cytoplasmic tail); the interaction occurs upon platelet aggregation and is stabilized/increased in a calcium and magnesium-dependent manner. Interacts with PAK1 (via N-terminal region); the interaction is direct and occurs in a calcium-dependent manner. Interacts with RAC3 (via C-terminal region); the interaction induces their association with the cytoskeleton upon alpha-IIb/beta3 integrin-mediated adhesion. Interacts with ITGA5 and ITGAV. Interacts with MYO1C. Interacts with ITGA2B (via C-terminal cytoplasmic tail region). Interacts (via C-terminal region) with PPP3R1; the interaction increases upon cardiomyocytes hypertrophy. Interacts with CACNA1C; the interaction increases upon cardiomyocytes hypertrophy. Interacts with TAS1R2 (via C-terminus); this interaction is independent of the myristoylation state of CIB1. Interacts and forms a complex with TMC6 and TMC8; the interaction stabilizes each component of the complex.

It is found in the membrane. The protein localises to the cell membrane. The protein resides in the sarcolemma. Its subcellular location is the apical cell membrane. It localises to the cell projection. It is found in the ruffle membrane. The protein localises to the filopodium tip. The protein resides in the growth cone. Its subcellular location is the lamellipodium. It localises to the cytoplasm. It is found in the cytoskeleton. The protein localises to the microtubule organizing center. The protein resides in the centrosome. Its subcellular location is the perinuclear region. It localises to the nucleus. It is found in the neuron projection. The protein localises to the perikaryon. In terms of biological role, calcium-binding protein that plays a role in the regulation of numerous cellular processes, such as cell differentiation, cell division, cell proliferation, cell migration, thrombosis, angiogenesis, cardiac hypertrophy and apoptosis. Involved in bone marrow megakaryocyte differentiation by negatively regulating thrombopoietin-mediated signaling pathway. Participates in the endomitotic cell cycle of megakaryocyte, a form of mitosis in which both karyokinesis and cytokinesis are interrupted. Plays a role in integrin signaling by negatively regulating alpha-IIb/beta3 activation in thrombin-stimulated megakaryocytes preventing platelet aggregation. Up-regulates PTK2/FAK1 activity, and is also needed for the recruitment of PTK2/FAK1 to focal adhesions; it thus appears to play an important role in focal adhesion formation. Positively regulates cell migration on fibronectin in a CDC42-dependent manner, the effect being negatively regulated by PAK1. Functions as a negative regulator of stress activated MAP kinase (MAPK) signaling pathways. Down-regulates inositol 1,4,5-trisphosphate receptor-dependent calcium signaling. Involved in sphingosine kinase SPHK1 translocation to the plasma membrane in a N-myristoylation-dependent manner preventing TNF-alpha-induced apoptosis. Regulates serine/threonine-protein kinase PLK3 activity for proper completion of cell division progression. Plays a role in microtubule (MT) dynamics during neuronal development; disrupts the MT depolymerization activity of STMN2 attenuating NGF-induced neurite outgrowth and the MT reorganization at the edge of lamellipodia. Promotes cardiomyocyte hypertrophy via activation of the calcineurin/NFAT signaling pathway. Stimulates calcineurin PPP3R1 activity by mediating its anchoring to the sarcolemma. In ischemia-induced (pathological or adaptive) angiogenesis, stimulates endothelial cell proliferation, migration and microvessel formation by activating the PAK1 and ERK1/ERK2 signaling pathway. Also promotes cancer cell survival and proliferation. May regulate cell cycle and differentiation of spermatogenic germ cells, and/or differentiation of supporting Sertoli cells. Forms a complex with TMC6/EVER1 and TMC8/EVER2 in lymphocytes and keratynocytes where CIB1 stabilizes TMC6 and TMC8 levels and reciprocally. This chain is Calcium and integrin-binding protein 1 (CIB1), found in Bos taurus (Bovine).